A 173-amino-acid chain; its full sequence is MKKNRLLFRVIILLILSGAVGFTLYQGFFADKEKMQIGKEAPNFVVTDLEGKKIELKDLKGKGVFLNFWGTWCKPCEKEMPYMNELYPKYKEKGVEIIALDADETDIAVKNFVNQYGLKFPVAIDKGQKIIGTYGVGPLPTSFLIDKDGKVVEQIIGEQTKEQLEGYLKKITP.

Residues 10 to 29 (VIILLILSGAVGFTLYQGFF) form a helical; Signal-anchor for type II membrane protein membrane-spanning segment. A Thioredoxin domain is found at 35–173 (MQIGKEAPNF…LEGYLKKITP (139 aa)). An intrachain disulfide couples Cys-73 to Cys-76.

Belongs to the thioredoxin family. ResA subfamily.

The protein resides in the cell membrane. Its pathway is protein modification; cytochrome c assembly. Functionally, thiol-disulfide oxidoreductase which is required in disulfide reduction during c-type cytochrome synthesis. May accept reducing equivalents from CcdA, leading to breakage of disulfide bonds in apocytochrome c; following this reduction heme can be covalently attached. The sequence is that of Thiol-disulfide oxidoreductase ResA from Bacillus thuringiensis (strain Al Hakam).